The following is a 470-amino-acid chain: A-type ATP synthase subunit B (470 aa).

This sequence belongs to the ATPase alpha/beta chains family. In terms of assembly, has multiple subunits with at least A(3), B(3), C, D, E, F, H, I and proteolipid K(x).

Its subcellular location is the cell membrane. Its function is as follows. Component of the A-type ATP synthase that produces ATP from ADP in the presence of a proton gradient across the membrane. The B chain is a regulatory subunit. This Haloarcula marismortui (strain ATCC 43049 / DSM 3752 / JCM 8966 / VKM B-1809) (Halobacterium marismortui) protein is A-type ATP synthase subunit B.